Here is a 1302-residue protein sequence, read N- to C-terminus: MTHKRYASSLSAGLLATTCVAGLLLQANGARAQQAAEAQAPASSTTMMQAATVAPAQSGQAAVVQRLVQQARFWMQQHQYENARQSLQSAARLAPDSVDLLEAEGEYQSHIGNRDAALDTQRRLHQAAPGSTYESQLNDLLHEQAISQPDLAHARSLAASGHSDQAVEAYQHLFNGSTPTPSLAVEYYQTLAGVSGQAGTAQDGLIRLVKANPSDFRAQLALAQVLTYQPGTRMEGLQRLQALQKYQSSAPVEAATAEKSYRQTLSWLPVTPETLPLMQKWLDAHPSDSALRTHMAEPAGGPPDKGALARQDGFKALNAGRLSAAQAAFQSALNLNAKDGDALGGLGLVAMRAGHNEEAHRYLEDAIAADPKNAAHWRPALAGMAVGEEYGSVRRLIASGQTQEAEQRLMTLARQPGQSEGATLMLADLQRSTGQTGEAERNYRAILARNGDNPIALMGLARVLMGEGQESEANALLSRLGGRYSDQVQQIEVSGIMAEAARTSDSAQKVSLLRQAMTKAPDDPWLRINLANALQQQGDSAEAANVMRPLLTSPRTPADYQAAILYASGNGNDTLARRLLAGLSPDDYSPAIRTIADEMAIKADLASRLSMVSNPTPLVREALAAPDPTGARGVAVADLFRQRGDMLHAHMALRIASTRNIDLTTEQRLAYATEYMKISNPVAAARLLAPLGDGSGTATGSAMSPDQRQTLMQLRMGISVAQSDLLNQRGDQAAAYDHLAPALQADPEATSPKLALARLYNGRGKYGHALDIDLAVLRHNPQDLDARQAAVQAAANDGKDNLAMQLAQDGVQQSPMDARSWLGMAVADRAVGHGDRTLADLRRAYELRLQQLKISRGDAIGGDETQATAPPTANPFRRDAYGHALSLGAPPGENGYSTAGSVPEISDQMLSSINGQIHTLSEDMAPSVDAGLGFRVRSGTPGMGALTEASVPIVGRIPLQAGTSALTFTATPTFLTSGHLPQTGYDIPRFGTNLFALERNLQNQNNSAEHRINTDTIGREAGVAPDVRFANNWVSADVGASPLGFTLPNVIGGVEFAPRVGPVTFRVSGERRSITNSVLSYGGMTDALTGKKWGGVVTNHFHGQVEATLGNTIVYGGGGYAIQTGHHVQSNTEVEGGLGANTLVYRNRKHEVRVGVNLTYFGYKHNEDFYTYGQGGYFSPQSYFAATVPVRYSGHSGLFDWDVTGSIGYQLFHEHSSAFFPTNPVYQALANGLAGVSTAELSLESARYPGDDVGSLVGGFDGRVGYRVSHSLRLDLSGRFQKAGNWDEGGAMISAHYLIMDQ.

Positions 1–32 (MTHKRYASSLSAGLLATTCVAGLLLQANGARA) are cleaved as a signal peptide. TPR repeat units follow at residues 64–97 (VQRLVQQARFWMQQHQYENARQSLQSAARLAPDS), 147–180 (SQPDLAHARSLAASGHSDQAVEAYQHLFNGSTPT), 306–339 (GALARQDGFKALNAGRLSAAQAAFQSALNLNAKD), 340–373 (GDALGGLGLVAMRAGHNEEAHRYLEDAIAADPKN), 572–605 (NDTLARRLLAGLSPDDYSPAIRTIADEMAIKADL), 716–749 (MGISVAQSDLLNQRGDQAAAYDHLAPALQADPEA), and 750–783 (TSPKLALARLYNGRGKYGHALDIDLAVLRHNPQD).

The protein belongs to the AcsC/BcsC family.

The protein resides in the cell outer membrane. It participates in glycan metabolism; bacterial cellulose biosynthesis. Required for maximal bacterial cellulose synthesis. It may be involved in the formation of a membrane complex for extrusion of the cellulose product. The polypeptide is Cellulose synthase operon protein C (acsC) (Komagataeibacter xylinus (Gluconacetobacter xylinus)).